The primary structure comprises 1058 residues: DNA primase (1058 aa).

Residues 988 to 1028 form a CHC2-type zinc finger; the sequence is CLRFKHGRASRATARTFVALSVGANNRLCVSLCQQCFAAKC.

This sequence belongs to the herpesviridae DNA primase family. Associates with the helicase and the primase-associated factor to form the helicase-primase factor.

The protein localises to the host nucleus. Functionally, essential component of the helicase/primase complex. Unwinds the DNA at the replication forks and generates single-stranded DNA for both leading and lagging strand synthesis. The primase initiates primer synthesis and thereby produces large amount of short RNA primers on the lagging strand that the polymerase elongates using dNTPs. The sequence is that of DNA primase from Homo sapiens (Human).